The sequence spans 341 residues: Uroporphyrinogen decarboxylase (341 aa).

Substrate-binding positions include 25-29 (RQAGR), Phe44, Asp74, Tyr151, Ser206, and His318.

Belongs to the uroporphyrinogen decarboxylase family. Homodimer.

The protein localises to the cytoplasm. The enzyme catalyses uroporphyrinogen III + 4 H(+) = coproporphyrinogen III + 4 CO2. It participates in porphyrin-containing compound metabolism; protoporphyrin-IX biosynthesis; coproporphyrinogen-III from 5-aminolevulinate: step 4/4. Catalyzes the decarboxylation of four acetate groups of uroporphyrinogen-III to yield coproporphyrinogen-III. The polypeptide is Uroporphyrinogen decarboxylase (Christiangramia forsetii (strain DSM 17595 / CGMCC 1.15422 / KT0803) (Gramella forsetii)).